The sequence spans 574 residues: Septation ring formation regulator EzrA (574 aa).

Residues 1–7 are Extracellular-facing; it reads MSSGIIL. A helical transmembrane segment spans residues 8–26; the sequence is LIVAIVLLVIIAYLVGVII. Over 27–574 the chain is Cytoplasmic; that stretch reads RKRNDSLITS…YEKTREHIRF (548 aa). 3 coiled-coil regions span residues 102–141, 274–350, and 459–520; these read NFIR…EEKN, ELVT…ETES, and QLEA…SFEA.

The protein belongs to the EzrA family.

It localises to the cell membrane. Negative regulator of FtsZ ring formation; modulates the frequency and position of FtsZ ring formation. Inhibits FtsZ ring formation at polar sites. Interacts either with FtsZ or with one of its binding partners to promote depolymerization. The sequence is that of Septation ring formation regulator EzrA from Streptococcus pyogenes serotype M6 (strain ATCC BAA-946 / MGAS10394).